We begin with the raw amino-acid sequence, 447 residues long: Putative metabolite transport protein HI_0418 (447 aa).

Topologically, residues 1–28 are cytoplasmic; the sequence is MCKPQQKHYGRQVMNTQNSLKQVATATM. Residues 29–49 form a helical membrane-spanning segment; it reads VGTAIEYFDNYIYAMAAVLVF. The Periplasmic segment spans residues 50–63; that stretch reads NHQFFHAVDPLSGQ. The helical transmembrane segment at 64 to 84 threads the bilayer; that stretch reads IAALSTLALTFIARPLGAILF. Residues 85–96 are Cytoplasmic-facing; the sequence is GHFGDRFGRKNT. Residues 97–117 traverse the membrane as a helical segment; sequence FVMSLLLMGISTVVIGLLPTY. The Periplasmic portion of the chain corresponds to 118 to 119; the sequence is DS. Residues 120–140 form a helical membrane-spanning segment; sequence IGIWATILLCLCRIGQGIGLG. Residues 141 to 167 are Cytoplasmic-facing; it reads GEWGGAALVAVENAPEGKRGWYGTFPQ. A helical transmembrane segment spans residues 168–188; sequence LGAPLGLLLANGVFLGITAIF. The Periplasmic portion of the chain corresponds to 189 to 194; it reads GQEAMT. Residues 195–215 traverse the membrane as a helical segment; it reads EWAWRIPFLSSVILVAIGLYV. Residues 216–249 are Cytoplasmic-facing; it reads RLKLTEAPIFLAALNKPKPKRLPMLEVVTTHFKP. Residues 250-270 form a helical membrane-spanning segment; the sequence is FFLGMLVCIAGYVLFYIMIAF. At 271-295 the chain is on the periplasmic side; that stretch reads SQIYAKSAPTVSEAGYAMGLGFSPQ. Residues 296–316 traverse the membrane as a helical segment; it reads IFTALLMASAVSLAITIAASG. The Cytoplasmic segment spans residues 317 to 325; sequence KYIDKIGRR. A helical membrane pass occupies residues 326–346; it reads TWLIWTTVGVAIFGLSLPLFL. Residues 347-354 lie on the Periplasmic side of the membrane; it reads ENGTTTSL. Residues 355–375 form a helical membrane-spanning segment; that stretch reads FWFLFIGMGLIGMGYGPLASF. At 376 to 390 the chain is on the cytoplasmic side; that stretch reads LPELFPTHARYSGAS. The helical transmembrane segment at 391-411 threads the bilayer; the sequence is LTYNIAGLFGASVAAIIALPL. The Periplasmic segment spans residues 412–418; the sequence is NAHYGLK. Residues 419–439 form a helical membrane-spanning segment; that stretch reads GVGIYLTLNAVLSLVGLWFIS. Residues 440 to 447 are Cytoplasmic-facing; the sequence is ETKDKLLS.

Belongs to the major facilitator superfamily. Metabolite:H+ Symporter (MHS) family (TC 2.A.1.6) family.

Its subcellular location is the cell inner membrane. The polypeptide is Putative metabolite transport protein HI_0418 (Haemophilus influenzae (strain ATCC 51907 / DSM 11121 / KW20 / Rd)).